A 209-amino-acid polypeptide reads, in one-letter code: Ribosomal RNA large subunit methyltransferase E (209 aa).

S-adenosyl-L-methionine-binding residues include Gly-63, Trp-65, Asp-83, Asp-99, and Asp-124. The active-site Proton acceptor is Lys-164.

It belongs to the class I-like SAM-binding methyltransferase superfamily. RNA methyltransferase RlmE family.

It is found in the cytoplasm. It catalyses the reaction uridine(2552) in 23S rRNA + S-adenosyl-L-methionine = 2'-O-methyluridine(2552) in 23S rRNA + S-adenosyl-L-homocysteine + H(+). Functionally, specifically methylates the uridine in position 2552 of 23S rRNA at the 2'-O position of the ribose in the fully assembled 50S ribosomal subunit. This chain is Ribosomal RNA large subunit methyltransferase E, found in Shewanella putrefaciens (strain CN-32 / ATCC BAA-453).